The sequence spans 177 residues: Protein BROTHER of FT and TFL 1 (177 aa).

It belongs to the phosphatidylethanolamine-binding protein family.

It is found in the cytoplasm. Its function is as follows. May form complexes with phosphorylated ligands by interfering with kinases and their effectors. This is Protein BROTHER of FT and TFL 1 (BFT) from Arabidopsis thaliana (Mouse-ear cress).